We begin with the raw amino-acid sequence, 343 residues long: Phosphoribosylformylglycinamidine cyclo-ligase (343 aa).

This sequence belongs to the AIR synthase family.

It is found in the cytoplasm. The catalysed reaction is 2-formamido-N(1)-(5-O-phospho-beta-D-ribosyl)acetamidine + ATP = 5-amino-1-(5-phospho-beta-D-ribosyl)imidazole + ADP + phosphate + H(+). The protein operates within purine metabolism; IMP biosynthesis via de novo pathway; 5-amino-1-(5-phospho-D-ribosyl)imidazole from N(2)-formyl-N(1)-(5-phospho-D-ribosyl)glycinamide: step 2/2. This is Phosphoribosylformylglycinamidine cyclo-ligase from Thermodesulfovibrio yellowstonii (strain ATCC 51303 / DSM 11347 / YP87).